The following is a 312-amino-acid chain: Glyoxylate/hydroxypyruvate reductase A (312 aa).

R227 is an active-site residue. H275 acts as the Proton donor in catalysis.

This sequence belongs to the D-isomer specific 2-hydroxyacid dehydrogenase family. GhrA subfamily.

The protein resides in the cytoplasm. It carries out the reaction glycolate + NADP(+) = glyoxylate + NADPH + H(+). The enzyme catalyses (R)-glycerate + NAD(+) = 3-hydroxypyruvate + NADH + H(+). It catalyses the reaction (R)-glycerate + NADP(+) = 3-hydroxypyruvate + NADPH + H(+). Functionally, catalyzes the NADPH-dependent reduction of glyoxylate and hydroxypyruvate into glycolate and glycerate, respectively. This Salmonella agona (strain SL483) protein is Glyoxylate/hydroxypyruvate reductase A.